A 391-amino-acid chain; its full sequence is Ammonium transporter Amt1 (391 aa).

At 1–7 (MSDGNVA) the chain is on the extracellular side. Residues 8–27 (WILASTALVMLMVPGVGFFY) traverse the membrane as a helical segment. Topologically, residues 28–38 (AGMVRRKNAVN) are cytoplasmic. A helical membrane pass occupies residues 39-57 (MIALSFISLIITVLLWIFY). At 58–89 (GYSVSFGNDISGIIGGLNYALLSGVKGEDLLF) the chain is on the extracellular side. The helical transmembrane segment at 90–106 (MMYQMMFAAVTIAILTS) threads the bilayer. Residues 107–113 (AIAERAK) are Cytoplasmic-facing. A helical membrane pass occupies residues 114–137 (VSSFILLSALWLTFVYAPFAHWLW). Residues 138–152 (GGGWLAKLGALDFAG) lie on the Extracellular side of the membrane. The chain crosses the membrane as a helical span at residues 153 to 170 (GMVVHISSGFAALAVAMT). Over 171-188 (IGKRAGFEEYSIEPHSIP) the chain is Cytoplasmic. The helical transmembrane segment at 189–208 (LTLIGAALLWFGWFGFNGGS) threads the bilayer. Residues 209–217 (ALAANDVAI) lie on the Extracellular side of the membrane. A helical transmembrane segment spans residues 218–237 (NAVVVTNTSAAVAGFVWMVI). Over 238–245 (GWIKGKPG) the chain is Cytoplasmic. Residues 246-263 (SLGIVSGAIAGLAAITPA) traverse the membrane as a helical segment. Residues 264 to 268 (AGFVD) lie on the Extracellular side of the membrane. The helical transmembrane segment at 269–287 (VKGAIVIGLVAGIVCYLAM) threads the bilayer. Residues 288–300 (DFRIKKKIDESLD) lie on the Cytoplasmic side of the membrane. A helical membrane pass occupies residues 301–319 (AWAIHGIGGLWGSVAVGIL). The Extracellular segment spans residues 320-337 (ANPEVNGYAGLLFGNPQL). A helical transmembrane segment spans residues 338 to 363 (LVSQLIAVASTTAYAFLVTLILAKAV). Over 364–391 (DAAVGLRVSSQEEYVGLDLSQHEEVAYT) the chain is Cytoplasmic.

Belongs to the ammonia transporter channel (TC 1.A.11.2) family. In terms of assembly, homotrimer.

The protein resides in the cell membrane. Functionally, involved in the uptake of ammonium/ammonia (NH(4)(+)/NH(3)). Transport is electrogenic. Transport the ammonium and methylammonium cation with high specificity. This chain is Ammonium transporter Amt1, found in Archaeoglobus fulgidus (strain ATCC 49558 / DSM 4304 / JCM 9628 / NBRC 100126 / VC-16).